A 578-amino-acid polypeptide reads, in one-letter code: Putative fatty-acid--CoA ligase fadD21 (578 aa).

The protein belongs to the ATP-dependent AMP-binding enzyme family.

The chain is Putative fatty-acid--CoA ligase fadD21 (fadD21) from Mycobacterium bovis (strain ATCC BAA-935 / AF2122/97).